Reading from the N-terminus, the 312-residue chain is Metaxin-1 homolog (312 aa).

The helical transmembrane segment at 282–302 (ILFTIGALVLSVAFAIHTGLI) threads the bilayer.

Belongs to the metaxin family. In terms of assembly, associates with the mitochondrial contact site and cristae organizing system (MICOS) complex (also known as MINOS or MitOS complex).

It is found in the mitochondrion outer membrane. In terms of biological role, involved in transport of proteins into the mitochondrion. Essential for embryonic development. This chain is Metaxin-1 homolog, found in Caenorhabditis briggsae.